Reading from the N-terminus, the 29-residue chain is Kalata-B4 (29 aa).

A cross-link (cyclopeptide (Gly-Asp)) is located at residues 1–29; sequence GLPVCGETCVGGTCNTPGCTCSWPVCTRD. 3 cysteine pairs are disulfide-bonded: C5–C19, C9–C21, and C14–C26.

This is a cyclic peptide.

Probably participates in a plant defense mechanism. In Oldenlandia affinis, this protein is Kalata-B4.